A 477-amino-acid chain; its full sequence is Probable periplasmic serine endoprotease DegP-like (477 aa).

Positions 1–27 are cleaved as a signal peptide; that stretch reads MSIPRLKSYLTMFAAVLMLGQVLTAQA. Residues H117, D147, and S220 each act as charge relay system in the active site. Substrate contacts are provided by residues 218 to 220 and 275 to 279; these read GNS and LGVVI. 2 PDZ domains span residues 264 to 355 and 361 to 466; these read LKKD…IRNG and DISV…LRQG.

This sequence belongs to the peptidase S1C family.

The protein resides in the periplasm. The catalysed reaction is Acts on substrates that are at least partially unfolded. The cleavage site P1 residue is normally between a pair of hydrophobic residues, such as Val-|-Val.. Functionally, might be efficient in the degradation of transiently denatured and unfolded proteins which accumulate in the periplasm following stress conditions. This Pseudomonas putida (strain GB-1) protein is Probable periplasmic serine endoprotease DegP-like.